Reading from the N-terminus, the 100-residue chain is Urease subunit gamma (100 aa).

This sequence belongs to the urease gamma subunit family. Heterotrimer of UreA (gamma), UreB (beta) and UreC (alpha) subunits. Three heterotrimers associate to form the active enzyme.

The protein resides in the cytoplasm. The catalysed reaction is urea + 2 H2O + H(+) = hydrogencarbonate + 2 NH4(+). It functions in the pathway nitrogen metabolism; urea degradation; CO(2) and NH(3) from urea (urease route): step 1/1. This chain is Urease subunit gamma, found in Rhodopseudomonas palustris (strain BisB18).